We begin with the raw amino-acid sequence, 255 residues long: Ribosomal RNA small subunit methyltransferase G (255 aa).

Residues 1 to 44 (MSSPGRPKGEYRSAQHAGAVAGPPGRPDGEHRGSSGADPNGRLR) are disordered. S-adenosyl-L-methionine contacts are provided by residues G118, L123, 169–170 (VE), and R183.

This sequence belongs to the methyltransferase superfamily. RNA methyltransferase RsmG family.

It localises to the cytoplasm. The catalysed reaction is guanosine(527) in 16S rRNA + S-adenosyl-L-methionine = N(7)-methylguanosine(527) in 16S rRNA + S-adenosyl-L-homocysteine. Its function is as follows. Specifically methylates the N7 position of guanine in position 527 of 16S rRNA. This is Ribosomal RNA small subunit methyltransferase G from Bordetella petrii (strain ATCC BAA-461 / DSM 12804 / CCUG 43448).